A 181-amino-acid chain; its full sequence is Large ribosomal subunit protein uL6 (181 aa).

Belongs to the universal ribosomal protein uL6 family. As to quaternary structure, part of the 50S ribosomal subunit.

Functionally, this protein binds to the 23S rRNA, and is important in its secondary structure. It is located near the subunit interface in the base of the L7/L12 stalk, and near the tRNA binding site of the peptidyltransferase center. The polypeptide is Large ribosomal subunit protein uL6 (Lawsonia intracellularis (strain PHE/MN1-00)).